A 405-amino-acid polypeptide reads, in one-letter code: L-carnitine CoA-transferase (405 aa).

CoA contacts are provided by Lys-97 and Arg-104. The active-site Nucleophile is Asp-169.

It belongs to the CoA-transferase III family. CaiB subfamily. Homodimer.

The protein resides in the cytoplasm. It catalyses the reaction crotonobetainyl-CoA + (R)-carnitine = crotonobetaine + (R)-carnitinyl-CoA. The catalysed reaction is 4-(trimethylamino)butanoyl-CoA + (R)-carnitine = (R)-carnitinyl-CoA + 4-(trimethylamino)butanoate. It participates in amine and polyamine metabolism; carnitine metabolism. Functionally, catalyzes the reversible transfer of the CoA moiety from gamma-butyrobetainyl-CoA to L-carnitine to generate L-carnitinyl-CoA and gamma-butyrobetaine. Is also able to catalyze the reversible transfer of the CoA moiety from gamma-butyrobetainyl-CoA or L-carnitinyl-CoA to crotonobetaine to generate crotonobetainyl-CoA. The chain is L-carnitine CoA-transferase from Escherichia coli O127:H6 (strain E2348/69 / EPEC).